We begin with the raw amino-acid sequence, 367 residues long: Peptide chain release factor 2 (367 aa).

Gln-254 is modified (N5-methylglutamine).

The protein belongs to the prokaryotic/mitochondrial release factor family. Methylated by PrmC. Methylation increases the termination efficiency of RF2.

It is found in the cytoplasm. Its function is as follows. Peptide chain release factor 2 directs the termination of translation in response to the peptide chain termination codons UGA and UAA. The protein is Peptide chain release factor 2 of Neisseria meningitidis serogroup B (strain ATCC BAA-335 / MC58).